A 581-amino-acid chain; its full sequence is Proline--tRNA ligase (581 aa).

This sequence belongs to the class-II aminoacyl-tRNA synthetase family. ProS type 1 subfamily. In terms of assembly, homodimer.

It localises to the cytoplasm. It carries out the reaction tRNA(Pro) + L-proline + ATP = L-prolyl-tRNA(Pro) + AMP + diphosphate. Catalyzes the attachment of proline to tRNA(Pro) in a two-step reaction: proline is first activated by ATP to form Pro-AMP and then transferred to the acceptor end of tRNA(Pro). As ProRS can inadvertently accommodate and process non-cognate amino acids such as alanine and cysteine, to avoid such errors it has two additional distinct editing activities against alanine. One activity is designated as 'pretransfer' editing and involves the tRNA(Pro)-independent hydrolysis of activated Ala-AMP. The other activity is designated 'posttransfer' editing and involves deacylation of mischarged Ala-tRNA(Pro). The misacylated Cys-tRNA(Pro) is not edited by ProRS. This is Proline--tRNA ligase from Verminephrobacter eiseniae (strain EF01-2).